Reading from the N-terminus, the 299-residue chain is 5,10-dihydrophenazine-1-carboxylate 9-dimethylallyltransferase (299 aa).

The protein belongs to the aromatic prenyltransferase family.

The catalysed reaction is 5,10-dihydrophenazine 1-carboxylate + dimethylallyl diphosphate = 5,10-dihydro-9-dimethylallylphenazine 1-carboxylate + diphosphate. It participates in antibiotic biosynthesis; phenazine biosynthesis. Its activity is regulated as follows. Does not require magnesium or any other divalent metal ions for activity. Its function is as follows. Involved in the biosynthesis of prenylated phenazines. Catalyzes the transfer of a dimethylallyl moiety to C-9 of 5,10-dihydrophenazine 1-carboxylate (dihydro-PCA). Specific for both dimethylallyl diphosphate and dihydro-PCA. The polypeptide is 5,10-dihydrophenazine-1-carboxylate 9-dimethylallyltransferase (Streptomyces anulatus (Streptomyces chrysomallus)).